A 114-amino-acid chain; its full sequence is MGPGLLCWELLYLLGAGPVEAGVTQSPTHLIKTRGQQVTLRCSPISGHSSVSWYQQAPGQGPQFIFEYANELRRSEGNFPNRFSGRQFHDYCSEMNVSALELGDSALYLCARSL.

The signal sequence occupies residues 1–21; it reads MGPGLLCWELLYLLGAGPVEA. In terms of domain architecture, Ig-like spans 22 to 114; sequence GVTQSPTHLI…SALYLCARSL (93 aa). A disulfide bridge links Cys-42 with Cys-110. A glycan (N-linked (GlcNAc...) asparagine) is linked at Asn-96.

As to quaternary structure, alpha-beta TR is a heterodimer composed of an alpha and beta chain; disulfide-linked. The alpha-beta TR is associated with the transmembrane signaling CD3 coreceptor proteins to form the TR-CD3 (TcR or TCR). The assembly of alpha-beta TR heterodimers with CD3 occurs in the endoplasmic reticulum where a single alpha-beta TR heterodimer associates with one CD3D-CD3E heterodimer, one CD3G-CD3E heterodimer and one CD247 homodimer forming a stable octameric structure. CD3D-CD3E and CD3G-CD3E heterodimers preferentially associate with TR alpha and TR beta chains, respectively. The association of the CD247 homodimer is the last step of TcR assembly in the endoplasmic reticulum and is required for transport to the cell surface.

The protein localises to the cell membrane. Probable non-functional open reading frame (ORF) of V region of the variable domain of T cell receptor (TR) beta chain. Non-functional ORF generally cannot participate in the synthesis of a productive T cell receptor (TR) chain due to altered V-(D)-J or switch recombination and/or splicing site (at mRNA level) and/or conserved amino acid change (protein level). Alpha-beta T cell receptors are antigen specific receptors which are essential to the immune response and are present on the cell surface of T lymphocytes. Recognize peptide-major histocompatibility (MH) (pMH) complexes that are displayed by antigen presenting cells (APC), a prerequisite for efficient T cell adaptive immunity against pathogens. Binding of alpha-beta TR to pMH complex initiates TR-CD3 clustering on the cell surface and intracellular activation of LCK that phosphorylates the ITAM motifs of CD3G, CD3D, CD3E and CD247 enabling the recruitment of ZAP70. In turn ZAP70 phosphorylates LAT, which recruits numerous signaling molecules to form the LAT signalosome. The LAT signalosome propagates signal branching to three major signaling pathways, the calcium, the mitogen-activated protein kinase (MAPK) kinase and the nuclear factor NF-kappa-B (NF-kB) pathways, leading to the mobilization of transcription factors that are critical for gene expression and essential for T cell growth and differentiation. The T cell repertoire is generated in the thymus, by V-(D)-J rearrangement. This repertoire is then shaped by intrathymic selection events to generate a peripheral T cell pool of self-MH restricted, non-autoaggressive T cells. Post-thymic interaction of alpha-beta TR with the pMH complexes shapes TR structural and functional avidity. The sequence is that of Probable non-functional T cell receptor beta variable 5-3 from Homo sapiens (Human).